We begin with the raw amino-acid sequence, 309 residues long: NAD-dependent protein deacylase sirtuin-5B, mitochondrial (309 aa).

Residues 1-35 constitute a mitochondrion transit peptide; it reads MILLPFHTRRLVSHVYCGLKPASQNKGIALEMTRP. One can recognise a Deacetylase sirtuin-type domain in the interval 36–306; it reads SSNLANFREA…PPALARHETE (271 aa). Position 57–76 (57–76) interacts with NAD(+); the sequence is GAGVSAESGVPTIIGAGGYW. Substrate is bound by residues Y101 and R104. 139–142 contributes to the NAD(+) binding site; that stretch reads QNID. H157 serves as the catalytic Proton acceptor. Zn(2+) contacts are provided by C165, C168, C206, and C211. Residues 248 to 250, 274 to 276, and C292 each bind NAD(+); these read GTS and NME.

Belongs to the sirtuin family. Class III subfamily. Requires Zn(2+) as cofactor.

It is found in the mitochondrion. The protein resides in the cytoplasm. Its subcellular location is the cytosol. The protein localises to the nucleus. It catalyses the reaction N(6)-malonyl-L-lysyl-[protein] + NAD(+) + H2O = 2''-O-malonyl-ADP-D-ribose + nicotinamide + L-lysyl-[protein]. It carries out the reaction N(6)-succinyl-L-lysyl-[protein] + NAD(+) + H2O = 2''-O-succinyl-ADP-D-ribose + nicotinamide + L-lysyl-[protein]. The enzyme catalyses N(6)-glutaryl-L-lysyl-[protein] + NAD(+) + H2O = 2''-O-glutaryl-ADP-D-ribose + nicotinamide + L-lysyl-[protein]. In terms of biological role, NAD-dependent lysine demalonylase, desuccinylase and deglutarylase that specifically removes malonyl, succinyl and glutaryl groups on target proteins. Has weak NAD-dependent protein deacetylase activity; however this activity may not be physiologically relevant in vivo. The sequence is that of NAD-dependent protein deacylase sirtuin-5B, mitochondrial (sirt5-b) from Xenopus laevis (African clawed frog).